Reading from the N-terminus, the 124-residue chain is UPF0375 protein Y45F10C.4 (124 aa).

The signal sequence occupies residues 1–23 (MNFLPSTVLLLSFVVAIISGSFS). Residues Asn-36 and Asn-62 are each glycosylated (N-linked (GlcNAc...) asparagine).

It belongs to the UPF0375 family.

Its subcellular location is the secreted. This chain is UPF0375 protein Y45F10C.4, found in Caenorhabditis elegans.